The chain runs to 603 residues: Leucine-rich repeat-containing protein 40 (603 aa).

The tract at residues 1-27 (MAAARRARAGDPRAGFRRAAEEQSPAV) is disordered. 20 LRR repeats span residues 83–104 (DLTK…VRLL), 106–127 (ALTV…LGQL), 129–150 (NLQK…LLQL), 152–173 (HLKG…FGQL), 175–196 (SLEE…FALL), 198–219 (NLVR…ISAM), 221–242 (SLRQ…LASM), 244–265 (SLEQ…PSCK), 266–286 (LLKE…ENLK), 290–311 (SLSV…ITLL), 313–335 (KLER…GNLS), 336–357 (QLKF…LLQK), 401–422 (TLKL…VFSA), 427–449 (PVTS…VELK), 451–473 (SVCD…CTLH), 474–495 (KLTH…MEAL), 497–518 (RLQV…LYRM), 520–541 (ALET…QLKK), 544–565 (QLGT…LGNC), and 567–588 (TLRT…ILAK).

This Gallus gallus (Chicken) protein is Leucine-rich repeat-containing protein 40 (LRRC40).